A 236-amino-acid polypeptide reads, in one-letter code: UPF0257 lipoprotein YnfC (236 aa).

The N-terminal stretch at 1 to 16 (MKKPLLLTLLCMILAG) is a signal peptide. C17 carries N-palmitoyl cysteine lipidation. A lipid anchor (S-diacylglycerol cysteine) is attached at C17.

It belongs to the UPF0257 family.

The protein resides in the cell membrane. This chain is UPF0257 lipoprotein YnfC, found in Salmonella typhi.